The primary structure comprises 301 residues: 4-diphosphocytidyl-2-C-methyl-D-erythritol kinase (301 aa).

Lys18 is an active-site residue. 103–113 (PVAAGIGGGSA) serves as a coordination point for ATP. Asp145 is an active-site residue.

The protein belongs to the GHMP kinase family. IspE subfamily.

It catalyses the reaction 4-CDP-2-C-methyl-D-erythritol + ATP = 4-CDP-2-C-methyl-D-erythritol 2-phosphate + ADP + H(+). It participates in isoprenoid biosynthesis; isopentenyl diphosphate biosynthesis via DXP pathway; isopentenyl diphosphate from 1-deoxy-D-xylulose 5-phosphate: step 3/6. Functionally, catalyzes the phosphorylation of the position 2 hydroxy group of 4-diphosphocytidyl-2C-methyl-D-erythritol. This Bradyrhizobium sp. (strain BTAi1 / ATCC BAA-1182) protein is 4-diphosphocytidyl-2-C-methyl-D-erythritol kinase.